Here is a 192-residue protein sequence, read N- to C-terminus: Anthranilate synthase component 2 (192 aa).

One can recognise a Glutamine amidotransferase type-1 domain in the interval 3–192; that stretch reads NILLLDNIDS…LQRVIQWTKI (190 aa). Position 57–59 (57–59) interacts with L-glutamine; it reads GPG. The Nucleophile; for GATase activity role is filled by Cys-84. L-glutamine-binding positions include Gln-88 and 134 to 135; that span reads SL. Catalysis depends on for GATase activity residues His-170 and Glu-172.

Heterotetramer consisting of two non-identical subunits: a beta subunit (TrpG) and a large alpha subunit (TrpE).

It catalyses the reaction chorismate + L-glutamine = anthranilate + pyruvate + L-glutamate + H(+). It participates in amino-acid biosynthesis; L-tryptophan biosynthesis; L-tryptophan from chorismate: step 1/5. Its function is as follows. Part of a heterotetrameric complex that catalyzes the two-step biosynthesis of anthranilate, an intermediate in the biosynthesis of L-tryptophan. In the first step, the glutamine-binding beta subunit (TrpG) of anthranilate synthase (AS) provides the glutamine amidotransferase activity which generates ammonia as a substrate that, along with chorismate, is used in the second step, catalyzed by the large alpha subunit of AS (TrpE) to produce anthranilate. In the absence of TrpG, TrpE can synthesize anthranilate directly from chorismate and high concentrations of ammonia. The chain is Anthranilate synthase component 2 (trpG) from Buchnera aphidicola subsp. Baizongia pistaciae (strain Bp).